The following is a 139-amino-acid chain: Transcription antitermination protein NusB (139 aa).

It belongs to the NusB family.

Its function is as follows. Involved in transcription antitermination. Required for transcription of ribosomal RNA (rRNA) genes. Binds specifically to the boxA antiterminator sequence of the ribosomal RNA (rrn) operons. The protein is Transcription antitermination protein NusB of Salmonella agona (strain SL483).